We begin with the raw amino-acid sequence, 747 residues long: Polyribonucleotide nucleotidyltransferase (747 aa).

The Mg(2+) site is built by Asp487 and Asp493. The KH domain occupies 554-613; the sequence is PSTTTIKIDKDKIRDIIGPGGKIIKEICETSGAKIDISDDGTVSVYAADRDKLKIASDKI. Positions 623–691 constitute an S1 motif domain; that stretch reads GEIFNGTVTK…NKGKAKLTIK (69 aa). Residues 694–716 form a disordered region; the sequence is DKDKSLNNPKPQNSINNAKENSE. Polar residues predominate over residues 699 to 712; the sequence is LNNPKPQNSINNAK.

Belongs to the polyribonucleotide nucleotidyltransferase family. It depends on Mg(2+) as a cofactor.

Its subcellular location is the cytoplasm. The enzyme catalyses RNA(n+1) + phosphate = RNA(n) + a ribonucleoside 5'-diphosphate. Functionally, involved in mRNA degradation. Catalyzes the phosphorolysis of single-stranded polyribonucleotides processively in the 3'- to 5'-direction. The polypeptide is Polyribonucleotide nucleotidyltransferase (Rickettsia canadensis (strain McKiel)).